An 804-amino-acid polypeptide reads, in one-letter code: ABC transporter aclQ (804 aa).

Transmembrane regions (helical) follow at residues 3-23 (LAVL…ISYL), 52-72 (FTAI…SITI), 97-117 (IAVF…PFSP), 119-139 (LSHS…LAMF), 155-175 (LQLG…ALYF), 206-226 (HGGW…LWPS), 239-259 (FVLL…LGIV), 349-369 (LVFQ…YFLI), and 373-393 (AFYS…TIYM). The 283-residue stretch at 236-518 (IFCFVLLVIQ…FGSFYTQVQN (283 aa)) folds into the ABC transmembrane type-1 domain. The N-linked (GlcNAc...) asparagine glycan is linked to N460. The next 2 membrane-spanning stretches (helical) occupy residues 464 to 484 (NLLF…QISA) and 489 to 509 (VAMF…LNFF). Residues 552–786 (VEFTHVNFAY…NGMYSQMWAK (235 aa)) form the ABC transporter domain. 585–592 (GESGSGKS) is an ATP binding site. N639 and N797 each carry an N-linked (GlcNAc...) asparagine glycan.

Belongs to the ABC transporter superfamily. ABCB family. Heavy Metal importer (TC 3.A.1.210) subfamily.

It is found in the membrane. Its function is as follows. ABC transporter; part of the gene cluster that mediates the biosynthesis of aspirochlorine (or antibiotic A30641), an unusual halogenated spiro compound with distinctive antifungal properties due to selective inhibition of protein biosynthesis, and which is also active against bacteria, viruses, and murine tumor cells. This chain is ABC transporter aclQ, found in Aspergillus oryzae (strain ATCC 42149 / RIB 40) (Yellow koji mold).